The sequence spans 185 residues: Putative lipoprotein LprB (185 aa).

A signal peptide spans 1–24 (MRRKVRRLTLAVSALVALFPAVAG). Cys-25 is lipidated: N-palmitoyl cysteine. Cys-25 is lipidated: S-diacylglycerol cysteine. Residues 26 to 50 (SDSGDNKPGATIPSTPANAEGRHGP) form a disordered region.

It localises to the cell membrane. This Mycobacterium tuberculosis (strain CDC 1551 / Oshkosh) protein is Putative lipoprotein LprB (lprB).